A 1286-amino-acid polypeptide reads, in one-letter code: 5-oxoprolinase (1286 aa).

Phosphoserine is present on residues S930 and S1077.

Belongs to the oxoprolinase family. Homodimer.

Its subcellular location is the cytoplasm. The catalysed reaction is 5-oxo-L-proline + ATP + 2 H2O = L-glutamate + ADP + phosphate + H(+). Its function is as follows. Catalyzes the cleavage of 5-oxo-L-proline to form L-glutamate coupled to the hydrolysis of ATP to ADP and inorganic phosphate. In Saccharomyces cerevisiae (strain ATCC 204508 / S288c) (Baker's yeast), this protein is 5-oxoprolinase (OXP1).